Reading from the N-terminus, the 70-residue chain is Mu-agatoxin-Ao1a (70 aa).

Residues 1–20 (MKAIIFFCFLSVMVFIVAEA) form the signal peptide. A propeptide spanning residues 21 to 33 (SSLEALKIFEGER) is cleaved from the precursor. 4 disulfide bridges follow: Cys35–Cys50, Cys42–Cys55, Cys49–Cys65, and Cys57–Cys63. An Asparagine amide modification is found at Asn69.

The protein belongs to the neurotoxin 07 (Beta/delta-agtx) family. 04 (aga-5) subfamily. In terms of tissue distribution, expressed by the venom gland.

It localises to the secreted. Insecticidal neurotoxin that modulates the insect Nav channel (DmNaV1/tipE (para/tipE)) in a unique manner, with both the activation and inactivation processes being affected. The voltage dependence of activation is shifted toward more hyperpolarized potentials (analogous to site 4 toxins) and a non-inactivating persistent sodium current is induced (site 3-like action). Interestingly, both effects take place in a voltage-dependent manner, producing a bell-shaped curve between -80 and 0 mV. This is Mu-agatoxin-Ao1a from Agelena orientalis (Funnel-web spider).